The chain runs to 381 residues: MNPFSSESAWLCLTATAVLGGMLLCKAWSSGQLRSQVVCLAGLWGGACLLSLSLLCSLFLLSVSCFFLLYVSSSDQDLLPVDQKAVLVTGADSGFGHALAKHLDKLGFTVFAGVLDKEGPGAEELRKNCSERLSVLQMDVTKPEQIKDVHSEVAEKIQDKGLWAVVNNAGVLHFPIDGELIPMTVYRKCMAVNFFGAVEVTKVFLPLLRKSKGRLVNVSSMGAMIPFQMVAAYASTKAAISMFSAVIRQELAKWGVKVVTIHPGGFQTNIVGSQDSWDKMEKEILDHFSKEIQENYGQEYVHTQKLALPVMREMSNPDITPVLRDIQHAICAKNPSSFYCSGRMTYLWICFAAYSPISLLDYILKNYFTPKLMPRALRTAS.

The chain crosses the membrane as a helical; Signal-anchor for type II membrane protein span at residues 4–24 (FSSESAWLCLTATAVLGGMLL). 83–112 (QKAVLVTGADSGFGHALAKHLDKLGFTVFA) is a binding site for NAD(+). Substrate is bound at residue Ser220. Residue Tyr233 is the Proton acceptor of the active site.

Belongs to the short-chain dehydrogenases/reductases (SDR) family. In terms of assembly, homodimer. Highly expressed in the placenta, and in the small intestine, and liver.

It localises to the endoplasmic reticulum membrane. It carries out the reaction 17beta-estradiol + NAD(+) = estrone + NADH + H(+). The enzyme catalyses testosterone + NAD(+) = androst-4-ene-3,17-dione + NADH + H(+). The catalysed reaction is 17beta-hydroxy-5alpha-androstan-3-one + NAD(+) = 5alpha-androstan-3,17-dione + NADH + H(+). It catalyses the reaction (20S)-hydroxypregn-4-en-3-one + NAD(+) = progesterone + NADH + H(+). In terms of biological role, catalyzes the NAD-dependent oxidation of highly active 17beta-hydroxysteroids, such as estradiol (E2), testosterone (T), and dihydrotestosterone (DHT), to their less active forms and thus regulates the biological potency of these steroids. Oxidizes estradiol to estrone, testosterone to androstenedione, and dihydrotestosterone to 5alpha-androstan-3,17-dione. Also has 20-alpha-HSD activity. The chain is Estradiol 17-beta-dehydrogenase 2 (Hsd17b2) from Rattus norvegicus (Rat).